Reading from the N-terminus, the 248-residue chain is Gas vesicle protein J (248 aa).

A 1; truncated repeat occupies 121-140 (DVKDDLYQTSAKIPSPVDTP). Positions 121–245 (DVKDDLYQTS…EEIPSSVDPA (125 aa)) are 6 X 21 AA approximate tandem repeats. A run of 5 repeats spans residues 141–161 (IEVLDFQAQSSGGTPPYVNTS), 162–182 (MEILDFQAQTSAESSSPVGST), 183–203 (VEILDFQAQTSEESSSPVVST), 204–224 (VEILDFQAQTSEESSSPVGST), and 225–245 (VEILDFQAQTSEEIPSSVDPA).

Belongs to the gas vesicle GvpA family. As to quaternary structure, interacts with GvpA.

It is found in the gas vesicle. Its function is as follows. A minor component of the gas vesicle, might be involved in nucleating gas vesicle formation. Gas vesicles (GV) are hollow, gas filled proteinaceous nanostructures. During planktonic growth they allow positioning of the organism at a favorable depth for light or nutrient acquisition. This Dolichospermum flosaquae (Anabaena flos-aquae) protein is Gas vesicle protein J.